A 1954-amino-acid chain; its full sequence is Protein abnormal spindle (1954 aa).

The disordered stretch occupies residues 134 to 155; sequence VKNPRKFPTVGKTLQLKSPTGA. A phosphoserine mark is found at serine 151 and serine 360. Threonine 364 is modified (phosphothreonine). 10 positions are modified to phosphoserine: serine 388, serine 390, serine 395, serine 398, serine 491, serine 495, serine 497, serine 501, serine 504, and serine 514. Residues 476 to 548 are disordered; the sequence is KSVKGSPVKN…SSSAHAWPHA (73 aa). Positions 498-507 are enriched in polar residues; it reads DAPSNESLYR. Over residues 528-548 the composition is skewed to low complexity; it reads RSAAPANASARSSSAHAWPHA. The Calponin-homology (CH) domain occupies 836 to 968; sequence KETKDILLRF…LLWQLIYKFR (133 aa). 3 consecutive IQ domains span residues 1004-1033, 1386-1415, and 1467-1496; these read RHRA…ERTQ, TQAA…QLRQ, and QREA…KQRQ. Positions 1614 to 1641 form a coiled coil; sequence RANRSMKQARQEFVQLRTIAVHLQQKFR. 2 IQ domains span residues 1656–1687 and 1690–1721; these read LRCS…MMDL and QKRA…IRKR.

It is found in the cytoplasm. The protein localises to the nucleus. It localises to the cytoskeleton. Its subcellular location is the spindle. The protein resides in the microtubule organizing center. It is found in the perinuclear region. Functionally, required to maintain the structure of the centrosomal microtubule organizing center (MTOC) during mitosis. May have a preferential role in regulating neurogenesis. Required for germ cell mitosis and oocyte differentiation. This is Protein abnormal spindle from Drosophila melanogaster (Fruit fly).